A 404-amino-acid chain; its full sequence is MSQSGSRLFTSESVTEGHPDKICDAISDSILDALLTDDPRARVAVETLVTTGQVHVAGEVTTTAYADIPKIVRDTVLEIGYDSSAKGFDGNSCGVNVAIGAQSPEIAQGVDHSHEVRTGELSDDEIDRQGAGDQGLMFGFATTDTPELMPLPIALAHRLSRRLTEVRKSGVLPYLRPDGKTQVTIEYDGDKAVRLDTVVISTQHAADIDLDNLLTPDLREKVLGSVLAEIDMPELDVSDIRLLVNPTGKFVLGGPMGDAGLTGRKIIVDTYGGMARHGGGAFSGKDPSKVDRSAAYAMRWVAKNAVAAGLADRIEVQVAYAIGKAAPVGLFVETFGTEKTDPARIQQAITETFDLRPGAIIRDLDLLRPIYAQTAAYGHFGRTDIDLPWESIDRAEKLRAAAGL.

His18 is a binding site for ATP. Asp20 is a binding site for Mg(2+). Glu46 provides a ligand contact to K(+). 2 residues coordinate L-methionine: Glu59 and Gln102. The tract at residues 102-112 (QSPEIAQGVDH) is flexible loop. Residues 178–180 (DGK), 249–250 (KF), Asp258, 264–265 (RK), Ala281, and Lys285 contribute to the ATP site. Residue Asp258 participates in L-methionine binding. Residue Lys289 participates in L-methionine binding.

Belongs to the AdoMet synthase family. In terms of assembly, homotetramer; dimer of dimers. The cofactor is Mg(2+). K(+) is required as a cofactor.

The protein resides in the cytoplasm. It catalyses the reaction L-methionine + ATP + H2O = S-adenosyl-L-methionine + phosphate + diphosphate. Its pathway is amino-acid biosynthesis; S-adenosyl-L-methionine biosynthesis; S-adenosyl-L-methionine from L-methionine: step 1/1. Catalyzes the formation of S-adenosylmethionine (AdoMet) from methionine and ATP. The overall synthetic reaction is composed of two sequential steps, AdoMet formation and the subsequent tripolyphosphate hydrolysis which occurs prior to release of AdoMet from the enzyme. The chain is S-adenosylmethionine synthase from Rhodococcus opacus (strain B4).